The following is a 198-amino-acid chain: DnaJ homolog subfamily C member 12 (198 aa).

Met1 is subject to N-acetylmethionine. The J domain occupies 14–79 (DYYTLLGCDE…ASRARYDHWR (66 aa)). The disordered stretch occupies residues 112–167 (MLEESDQTPTDKIENEEQDEQKEIKKEEFGSTTEKMEQKESKSVEKSFSPQNPDSP). Basic and acidic residues predominate over residues 120-156 (PTDKIENEEQDEQKEIKKEEFGSTTEKMEQKESKSVE). 3 positions are modified to phosphoserine: Ser160, Ser166, and Ser182.

In terms of assembly, interacts with HSPA8. Interacts with TPH1. Interacts with TPH2.

The protein resides in the cytoplasm. Functionally, probable co-chaperone that participates in the proper folding of biopterin-dependent aromatic amino acid hydroxylases, which include phenylalanine-4-hydroxylase (PAH), tyrosine 3-monooxygenase (TH) and peripheral and neuronal tryptophan hydroxylases (TPH1 and TPH2). In Bos taurus (Bovine), this protein is DnaJ homolog subfamily C member 12 (DNAJC12).